The primary structure comprises 150 residues: D-aminoacyl-tRNA deacylase (150 aa).

The Gly-cisPro motif, important for rejection of L-amino acids signature appears at 138-139 (GP).

Belongs to the DTD family. As to quaternary structure, homodimer.

The protein resides in the cytoplasm. It carries out the reaction glycyl-tRNA(Ala) + H2O = tRNA(Ala) + glycine + H(+). The enzyme catalyses a D-aminoacyl-tRNA + H2O = a tRNA + a D-alpha-amino acid + H(+). Its function is as follows. An aminoacyl-tRNA editing enzyme that deacylates mischarged D-aminoacyl-tRNAs. Also deacylates mischarged glycyl-tRNA(Ala), protecting cells against glycine mischarging by AlaRS. Acts via tRNA-based rather than protein-based catalysis; rejects L-amino acids rather than detecting D-amino acids in the active site. By recycling D-aminoacyl-tRNA to D-amino acids and free tRNA molecules, this enzyme counteracts the toxicity associated with the formation of D-aminoacyl-tRNA entities in vivo and helps enforce protein L-homochirality. The polypeptide is D-aminoacyl-tRNA deacylase (Thermosipho melanesiensis (strain DSM 12029 / CIP 104789 / BI429)).